The primary structure comprises 50 residues: Ampulexin 2 (50 aa).

The first 26 residues, 1 to 26 (MKAIMVLFYVMTLTIIGSFSMVSGSP), serve as a signal peptide directing secretion.

As to quaternary structure, dimer; disulfide-linked. Expressed in venom sac and, to a lesser extent, in venom gland. Not expressed in brain.

It localises to the secreted. Its function is as follows. Amphipathic peptide which probably adopts an alpha-helical structure. Has no antimicrobial activity against E.coli DH5alpha or B.thuringiensis. Is not cytotoxic in vitro. This is Ampulexin 2 from Ampulex compressa (Emerald cockroach wasp).